Consider the following 69-residue polypeptide: DNA-directed RNA polymerase subunit omega (69 aa).

This sequence belongs to the RNA polymerase subunit omega family. As to quaternary structure, the RNAP catalytic core consists of 2 alpha, 1 beta, 1 beta' and 1 omega subunit. When a sigma factor is associated with the core the holoenzyme is formed, which can initiate transcription.

The catalysed reaction is RNA(n) + a ribonucleoside 5'-triphosphate = RNA(n+1) + diphosphate. Its function is as follows. Promotes RNA polymerase assembly. Latches the N- and C-terminal regions of the beta' subunit thereby facilitating its interaction with the beta and alpha subunits. The polypeptide is DNA-directed RNA polymerase subunit omega (Heliobacterium modesticaldum (strain ATCC 51547 / Ice1)).